Reading from the N-terminus, the 79-residue chain is Translation initiation factor IF-1, chloroplastic (79 aa).

The region spanning 1–74 is the S1-like domain; sequence MTRKNIDLIE…HRGRITFRLR (74 aa).

It belongs to the IF-1 family. As to quaternary structure, component of the 30S ribosomal translation pre-initiation complex which assembles on the 30S ribosome in the order IF-2 and IF-3, IF-1 and N-formylmethionyl-tRNA(fMet); mRNA recruitment can occur at any time during PIC assembly.

It is found in the plastid. Its subcellular location is the chloroplast. One of the essential components for the initiation of protein synthesis. Stabilizes the binding of IF-2 and IF-3 on the 30S subunit to which N-formylmethionyl-tRNA(fMet) subsequently binds. Helps modulate mRNA selection, yielding the 30S pre-initiation complex (PIC). Upon addition of the 50S ribosomal subunit IF-1, IF-2 and IF-3 are released leaving the mature 70S translation initiation complex. This chain is Translation initiation factor IF-1, chloroplastic, found in Chlorella vulgaris (Green alga).